A 336-amino-acid chain; its full sequence is Putative transcription factor avaE (336 aa).

A DNA-binding region (WRKY) is located at residues 32-100; it reads TATRLNQTTF…VPLDQNESMP (69 aa).

The protein resides in the nucleus. It functions in the pathway secondary metabolite biosynthesis. Functionally, putative transcription factor; part of the cluster that mediates the biosynthesis of a highly modified cyclo-arginine-tryptophan dipeptide (cRW). In Aspergillus versicolor, this protein is Putative transcription factor avaE.